Here is a 301-residue protein sequence, read N- to C-terminus: Cell division control protein 2 homolog 1 (301 aa).

One can recognise a Protein kinase domain in the interval 5–297 (YERLQKIGEG…AAQALEHPYF (293 aa)). Residues 11–19 (IGEGSYGVV) and lysine 34 each bind ATP. A Phosphoserine modification is found at serine 15. Tyrosine 16 carries the phosphotyrosine modification. Aspartate 127 functions as the Proton acceptor in the catalytic mechanism. At threonine 160 the chain carries Phosphothreonine; by CAK.

Belongs to the protein kinase superfamily. CMGC Ser/Thr protein kinase family. CDC2/CDKX subfamily. Forms a stable but non-covalent complex with a regulatory subunit and with a cyclin.

It catalyses the reaction L-seryl-[protein] + ATP = O-phospho-L-seryl-[protein] + ADP + H(+). The catalysed reaction is L-threonyl-[protein] + ATP = O-phospho-L-threonyl-[protein] + ADP + H(+). Phosphorylation at Ser-15 or Tyr-16 inactivates the enzyme, while phosphorylation at Thr-160 activates it. Probably involved in the control of the cell cycle. In Trypanosoma brucei brucei, this protein is Cell division control protein 2 homolog 1 (CRK1).